A 76-amino-acid polypeptide reads, in one-letter code: Heat shock factor-binding protein 1 (76 aa).

This sequence belongs to the HSBP1 family. As to quaternary structure, homohexamer. Associates with heptad repeats of HSF1 trimers and probably also HSF1 monomers, and with HSP70. Association with HSF1 trimers and HSP70 coincides with attenuation of heat shock response and the conversion of HSF1 trimer to monomer.

The protein resides in the nucleus. Functionally, negative regulator of the heat shock response. Negatively affects HSF1 DNA-binding activity. May have a role in the suppression of the activation of the stress response during the aging process. In Pongo abelii (Sumatran orangutan), this protein is Heat shock factor-binding protein 1 (HSBP1).